The sequence spans 482 residues: Major cardiolipin synthase ClsA (482 aa).

The next 2 membrane-spanning stretches (helical) occupy residues 3-23 and 34-54; these read ISSI…IIVI and WAWL…YLLF. 2 consecutive PLD phosphodiesterase domains span residues 217 to 244 and 395 to 422; these read LNYR…GDEY and DNGF…DVRS. Catalysis depends on residues His-222, Lys-224, Asp-229, His-400, Lys-402, and Asp-407.

The protein belongs to the phospholipase D family. Cardiolipin synthase subfamily.

It is found in the cell membrane. The enzyme catalyses 2 a 1,2-diacyl-sn-glycero-3-phospho-(1'-sn-glycerol) = a cardiolipin + glycerol. Catalyzes the reversible phosphatidyl group transfer from one phosphatidylglycerol molecule to another to form cardiolipin (CL) (diphosphatidylglycerol) and glycerol. The polypeptide is Major cardiolipin synthase ClsA (clsA) (Bacillus subtilis (strain 168)).